The primary structure comprises 103 residues: Large ribosomal subunit protein bL21 (103 aa).

Belongs to the bacterial ribosomal protein bL21 family. In terms of assembly, part of the 50S ribosomal subunit. Contacts protein L20.

Its function is as follows. This protein binds to 23S rRNA in the presence of protein L20. This chain is Large ribosomal subunit protein bL21, found in Haemophilus ducreyi (strain 35000HP / ATCC 700724).